The following is a 277-amino-acid chain: 3-methyl-2-oxobutanoate hydroxymethyltransferase (277 aa).

Mg(2+)-binding residues include Asp43 and Asp82. Residues 43-44, Asp82, and Lys112 contribute to the 3-methyl-2-oxobutanoate site; that span reads DS. Mg(2+) is bound at residue Glu114. Glu181 (proton acceptor) is an active-site residue.

Belongs to the PanB family. In terms of assembly, homodecamer; pentamer of dimers. Requires Mg(2+) as cofactor.

The protein resides in the cytoplasm. The catalysed reaction is 3-methyl-2-oxobutanoate + (6R)-5,10-methylene-5,6,7,8-tetrahydrofolate + H2O = 2-dehydropantoate + (6S)-5,6,7,8-tetrahydrofolate. It participates in cofactor biosynthesis; (R)-pantothenate biosynthesis; (R)-pantoate from 3-methyl-2-oxobutanoate: step 1/2. Its function is as follows. Catalyzes the reversible reaction in which hydroxymethyl group from 5,10-methylenetetrahydrofolate is transferred onto alpha-ketoisovalerate to form ketopantoate. This is 3-methyl-2-oxobutanoate hydroxymethyltransferase from Exiguobacterium sp. (strain ATCC BAA-1283 / AT1b).